Reading from the N-terminus, the 258-residue chain is Gamma carbonic anhydrase 3, mitochondrial (258 aa).

Residues 1 to 43 constitute a mitochondrion transit peptide; it reads MGTMGKAFYSVGFWIRETGQALDRLGCRLQGKNHFREQLSRHR. Substrate contacts are provided by residues 86–88 and 101–102; these read RGD and QD. Histidine 107, histidine 130, and histidine 135 together coordinate Zn(2+). Residue asparagine 209 participates in substrate binding.

It belongs to the gamma-class carbonic anhydrase family. Homotrimer. Component of the oxidoreductase respiratory chain complex I; element of the extra matrix-exposed domain, which is attached to the membrane arm of this complex. Zn(2+) serves as cofactor.

It is found in the mitochondrion membrane. Its function is as follows. Enzyme involved in the catabolism of H(2)CO(3) but that does not mediates the reversible hydration of carbon dioxide. Mediates complex I assembly in mitochondria and respiration. The chain is Gamma carbonic anhydrase 3, mitochondrial (GAMMACA3) from Arabidopsis thaliana (Mouse-ear cress).